Reading from the N-terminus, the 698-residue chain is FHF complex subunit HOOK-interacting protein 2B (698 aa).

It belongs to the FHIP family.

The protein is FHF complex subunit HOOK-interacting protein 2B (fhip2b) of Xenopus tropicalis (Western clawed frog).